Here is a 383-residue protein sequence, read N- to C-terminus: Delta(12) fatty acid desaturase FAD2 (383 aa).

Positions 1-29 (MGAGGRMQDPTNGGNKTEPEPIQRVPHEK) are disordered. Over residues 17–29 (TEPEPIQRVPHEK) the composition is skewed to basic and acidic residues. The next 2 membrane-spanning stretches (helical) occupy residues 50 to 70 (VIRS…LYYI) and 85 to 105 (VAWP…WVIA). Positions 106 to 110 (HECGH) match the Histidine box-1 motif. The chain crosses the membrane as a helical span at residues 118-138 (WLDDTVGLVLHSFLLVPYFSW). The Histidine box-2 signature appears at 142 to 146 (HRRHH). The next 3 membrane-spanning stretches (helical) occupy residues 180 to 200 (ILTL…FNVS), 226 to 246 (IFIS…LAMT), and 252 to 272 (VLTM…LITF). The Histidine box-3 motif lies at 316–320 (HVAHH).

Belongs to the fatty acid desaturase type 1 family. Expressed in leaves, flower buds and developing seeds.

It localises to the membrane. The protein operates within lipid metabolism; polyunsaturated fatty acid biosynthesis. Its function is as follows. Catalyzes the desaturation of oleic acid to linoleic acid. Introduces a double bond at position 12 of 16:1(9Z) and 18:1(9Z). The sequence is that of Delta(12) fatty acid desaturase FAD2 from Calendula officinalis (Pot marigold).